The primary structure comprises 82 residues: Putative membrane protein insertion efficiency factor (82 aa).

It belongs to the UPF0161 family.

It is found in the cell inner membrane. In terms of biological role, could be involved in insertion of integral membrane proteins into the membrane. In Rickettsia africae (strain ESF-5), this protein is Putative membrane protein insertion efficiency factor.